The chain runs to 180 residues: MKIALSGKSGCGNTTVSGMIAKHYGLEFINYTFHDIAREHNIPFSEFYEKEIIGRNDYYWDKYLDNRLSVLSRKNNTVLASRLAIWISKSADLKIYLYAKMEVRAERIMTREGGMYSDVLSSTFIRDENDKKRYLAIYNIDIDDYFSETDLVIDVTNINPNEVFELIRDEIDKRNLKKNS.

7-15 lines the ATP pocket; the sequence is GKSGCGNTT.

This sequence belongs to the cytidylate kinase family. Type 2 subfamily.

Its subcellular location is the cytoplasm. The enzyme catalyses CMP + ATP = CDP + ADP. It carries out the reaction dCMP + ATP = dCDP + ADP. This Borreliella burgdorferi (strain ATCC 35210 / DSM 4680 / CIP 102532 / B31) (Borrelia burgdorferi) protein is Cytidylate kinase 2 (cmk2).